Reading from the N-terminus, the 343-residue chain is Twinfilin (343 aa).

2 ADF-H domains span residues 4 to 139 (QTGI…KHKI) and 177 to 312 (GINC…EELH). Residues 317–343 (NLRPQFSKPKGPPSRGAKRLTKPQAVE) form a disordered region.

This sequence belongs to the actin-binding proteins ADF family. Twinfilin subfamily. As to quaternary structure, interacts with G-actin; ADP-actin form.

Its subcellular location is the cytoplasm. The protein localises to the cytoskeleton. It is found in the cell cortex. Its function is as follows. Actin-binding protein involved in motile and morphological processes. Inhibits actin polymerization, likely by sequestering G-actin. The protein is Twinfilin (twf) of Aedes aegypti (Yellowfever mosquito).